The primary structure comprises 316 residues: Cuticle collagen 13 (316 aa).

The signal sequence occupies residues 1–36; it reads MSEDLKQIAQETESLRKVAFFGIAVSTIATLTAIIA. Low complexity-rich tracts occupy residues 127 to 157 and 183 to 204; these read SGAA…PGQD and APGQ…GAAL. Positions 127–316 are disordered; the sequence is SGAAGPAGSP…CPPPRTAPGY (190 aa). Triple-helical region regions lie at residues 128-157, 176-202, 206-235, 240-266, and 269-304; these read GAAG…PGQD, GPPG…SGGA, GPPG…PGQV, GTPG…AGSS, and GGPG…EGAC. Residues 205–217 show a composition bias toward pro residues; the sequence is PGPPGPAGPPGPA. Over residues 219-234 the composition is skewed to low complexity; the sequence is QPGSNGNAGAPGAPGQ. Positions 241–251 are enriched in pro residues; that stretch reads TPGPAGPPGSP. Low complexity-rich tracts occupy residues 256 to 266 and 276 to 295; these read APGQPGQAGSS and DAGA…PGQD. A compositionally biased stretch (pro residues) spans 307–316; it reads CPPPRTAPGY.

The protein belongs to the cuticular collagen family. Collagen polypeptide chains are complexed within the cuticle by disulfide bonds and other types of covalent cross-links.

In terms of biological role, nematode cuticles are composed largely of collagen-like proteins. The cuticle functions both as an exoskeleton and as a barrier to protect the worm from its environment. The chain is Cuticle collagen 13 (col-13) from Caenorhabditis elegans.